Consider the following 418-residue polypeptide: UPF0261 protein BRA1168/BS1330_II1159 (418 aa).

Belongs to the UPF0261 family.

The sequence is that of UPF0261 protein BRA1168/BS1330_II1159 from Brucella suis biovar 1 (strain 1330).